Consider the following 549-residue polypeptide: Glutamyl-tRNA(Gln) amidotransferase subunit B, mitochondrial (549 aa).

A mitochondrion-targeting transit peptide spans 1–23 (MLRISRDTKIVARVTHVTKSRTY).

The protein belongs to the GatB/GatE family. GatB subfamily. In terms of assembly, subunit of the heterotrimeric GatFAB amidotransferase (AdT) complex, composed of A, B and F subunits.

It is found in the mitochondrion. The catalysed reaction is L-glutamyl-tRNA(Gln) + L-glutamine + ATP + H2O = L-glutaminyl-tRNA(Gln) + L-glutamate + ADP + phosphate + H(+). Allows the formation of correctly charged Gln-tRNA(Gln) through the transamidation of misacylated Glu-tRNA(Gln) in the mitochondria. The reaction takes place in the presence of glutamine and ATP through an activated gamma-phospho-Glu-tRNA(Gln). The sequence is that of Glutamyl-tRNA(Gln) amidotransferase subunit B, mitochondrial from Yarrowia lipolytica (strain CLIB 122 / E 150) (Yeast).